Reading from the N-terminus, the 57-residue chain is U17-myrmicitoxin-Tb1a (57 aa).

The signal sequence occupies residues 1–29 (MEKNRTNIFSVYLMITFLLISIFITMVMS). Positions 30 to 33 (DGEA) are excised as a propeptide. C42 and C53 are joined by a disulfide. A56 carries the post-translational modification Alanine amide.

O-glycosylated. In terms of tissue distribution, expressed by the venom gland.

It localises to the secreted. Serine protease inhibitor which exhibits antifibrinolytic, antielastolytic and antimicrobial activities. Displays antimicrobial activity against bacteria and fungi. Likely functions in the innate immune response to microbial infection and possibly in the venom, as an antifibrinolytic agent. The polypeptide is U17-myrmicitoxin-Tb1a (Tetramorium bicarinatum (Tramp ant)).